We begin with the raw amino-acid sequence, 371 residues long: tRNA-specific 2-thiouridylase MnmA (371 aa).

ATP-binding positions include 7-14 and leucine 33; that span reads AMSGGVDS. Catalysis depends on cysteine 101, which acts as the Nucleophile. Cysteine 101 and cysteine 213 are joined by a disulfide. Glycine 125 contacts ATP. Positions 163 to 165 are interaction with tRNA; sequence KDQ. Catalysis depends on cysteine 213, which acts as the Cysteine persulfide intermediate.

It belongs to the MnmA/TRMU family.

It localises to the cytoplasm. The catalysed reaction is S-sulfanyl-L-cysteinyl-[protein] + uridine(34) in tRNA + AH2 + ATP = 2-thiouridine(34) in tRNA + L-cysteinyl-[protein] + A + AMP + diphosphate + H(+). Its function is as follows. Catalyzes the 2-thiolation of uridine at the wobble position (U34) of tRNA, leading to the formation of s(2)U34. This is tRNA-specific 2-thiouridylase MnmA from Roseiflexus castenholzii (strain DSM 13941 / HLO8).